We begin with the raw amino-acid sequence, 106 residues long: Large ribosomal subunit protein eL42 (106 aa).

Residues 26–53 are disordered; it reads YKKGKDSLYAQGKRRYDRKQSGYGGQTK.

Belongs to the eukaryotic ribosomal protein eL42 family. As to quaternary structure, component of the large ribosomal subunit.

It is found in the cytoplasm. In terms of biological role, component of the large ribosomal subunit. The ribosome is a large ribonucleoprotein complex responsible for the synthesis of proteins in the cell. The protein is Large ribosomal subunit protein eL42 (rpl36a) of Danio rerio (Zebrafish).